A 221-amino-acid chain; its full sequence is Histone H1-like protein HC2 (221 aa).

Composition is skewed to basic residues over residues 1–50 (MLGV…KTVA) and 59–70 (PVAKKATAKKAP). The segment at 1 to 70 (MLGVQKKRST…AKKATAKKAP (70 aa)) is disordered.

It belongs to the histone H1/H5 family. HCT subfamily.

Its function is as follows. Might have a role in establishing the nucleoid structure of elementary bodies. This chain is Histone H1-like protein HC2 (hctB), found in Chlamydia trachomatis serovar L2 (strain ATCC VR-902B / DSM 19102 / 434/Bu).